An 80-amino-acid polypeptide reads, in one-letter code: ATP synthase subunit c (80 aa).

2 helical membrane-spanning segments follow: residues methionine 8–isoleucine 28 and isoleucine 55–isoleucine 75.

Belongs to the ATPase C chain family. As to quaternary structure, F-type ATPases have 2 components, F(1) - the catalytic core - and F(0) - the membrane proton channel. F(1) has five subunits: alpha(3), beta(3), gamma(1), delta(1), epsilon(1). F(0) has three main subunits: a(1), b(2) and c(10-14). The alpha and beta chains form an alternating ring which encloses part of the gamma chain. F(1) is attached to F(0) by a central stalk formed by the gamma and epsilon chains, while a peripheral stalk is formed by the delta and b chains.

The protein resides in the cell inner membrane. F(1)F(0) ATP synthase produces ATP from ADP in the presence of a proton or sodium gradient. F-type ATPases consist of two structural domains, F(1) containing the extramembraneous catalytic core and F(0) containing the membrane proton channel, linked together by a central stalk and a peripheral stalk. During catalysis, ATP synthesis in the catalytic domain of F(1) is coupled via a rotary mechanism of the central stalk subunits to proton translocation. In terms of biological role, key component of the F(0) channel; it plays a direct role in translocation across the membrane. A homomeric c-ring of between 10-14 subunits forms the central stalk rotor element with the F(1) delta and epsilon subunits. The protein is ATP synthase subunit c of Aeromonas salmonicida (strain A449).